Consider the following 815-residue polypeptide: Protein-glutamine gamma-glutamyltransferase K (815 aa).

2 disordered regions span residues 1-40 (MDGPRSDVGRWGGNPWQPPTTPSPEPEPEPEPERRSRRGG) and 59-100 (DDWG…AAGD). Residues 16–25 (WQPPTTPSPE) are compositionally biased toward pro residues. T21 carries the phosphothreonine modification. Phosphoserine occurs at positions 23, 80, 83, 90, and 93. The segment covering 59–87 (DDWGPEPHRDRGSGSGRRRPDSRGSDSRR) has biased composition (basic and acidic residues). Catalysis depends on residues C375, H434, and D457. The Ca(2+) site is built by N497, D499, E546, and E551. Residues 795 to 815 (SNAGGNSPLGETIPMASRGGA) are disordered.

It belongs to the transglutaminase superfamily. Transglutaminase family. As to quaternary structure, interacts with PLAAT4. Requires Ca(2+) as cofactor. In terms of processing, palmitoylated. The membrane anchorage region possesses a cluster of five cysteines within which fatty acid(s) may become thioester-linked. It is subject to phorbol ester-stimulated phosphorylation and is hypersensitive to proteolysis, which releases the enzyme in a soluble form. Post-translationally, tyrosine-phosphorylated.

It is found in the membrane. It catalyses the reaction L-glutaminyl-[protein] + L-lysyl-[protein] = [protein]-L-lysyl-N(6)-5-L-glutamyl-[protein] + NH4(+). Functionally, catalyzes the cross-linking of proteins and the conjugation of polyamines to proteins. Responsible for cross-linking epidermal proteins during formation of the stratum corneum. Involved in cell proliferation. The chain is Protein-glutamine gamma-glutamyltransferase K (TGM1) from Canis lupus familiaris (Dog).